We begin with the raw amino-acid sequence, 360 residues long: Phospho-N-acetylmuramoyl-pentapeptide-transferase (360 aa).

10 consecutive transmembrane segments (helical) span residues tyrosine 21–glycine 41, threonine 73–leucine 93, threonine 94–valine 114, alanine 145–phenylalanine 165, valine 168–serine 188, glycine 199–serine 219, alanine 236–phenylalanine 256, valine 263–isoleucine 283, isoleucine 288–valine 308, and isoleucine 339–isoleucine 359.

Belongs to the glycosyltransferase 4 family. MraY subfamily. Mg(2+) is required as a cofactor.

The protein resides in the cell inner membrane. It catalyses the reaction UDP-N-acetyl-alpha-D-muramoyl-L-alanyl-gamma-D-glutamyl-meso-2,6-diaminopimeloyl-D-alanyl-D-alanine + di-trans,octa-cis-undecaprenyl phosphate = di-trans,octa-cis-undecaprenyl diphospho-N-acetyl-alpha-D-muramoyl-L-alanyl-D-glutamyl-meso-2,6-diaminopimeloyl-D-alanyl-D-alanine + UMP. The protein operates within cell wall biogenesis; peptidoglycan biosynthesis. In terms of biological role, catalyzes the initial step of the lipid cycle reactions in the biosynthesis of the cell wall peptidoglycan: transfers peptidoglycan precursor phospho-MurNAc-pentapeptide from UDP-MurNAc-pentapeptide onto the lipid carrier undecaprenyl phosphate, yielding undecaprenyl-pyrophosphoryl-MurNAc-pentapeptide, known as lipid I. This chain is Phospho-N-acetylmuramoyl-pentapeptide-transferase, found in Chromohalobacter salexigens (strain ATCC BAA-138 / DSM 3043 / CIP 106854 / NCIMB 13768 / 1H11).